The following is a 414-amino-acid chain: Acetate kinase (414 aa).

Asn-7 contributes to the Mg(2+) binding site. Position 14 (Lys-14) interacts with ATP. Arg-99 is a substrate binding site. Asp-157 (proton donor/acceptor) is an active-site residue. Residues His-217–Gly-221 and Gly-341–Asn-345 contribute to the ATP site. Residue Glu-395 participates in Mg(2+) binding.

The protein belongs to the acetokinase family. As to quaternary structure, homodimer. Mg(2+) is required as a cofactor. Requires Mn(2+) as cofactor.

It localises to the cytoplasm. It catalyses the reaction acetate + ATP = acetyl phosphate + ADP. It participates in metabolic intermediate biosynthesis; acetyl-CoA biosynthesis; acetyl-CoA from acetate: step 1/2. Its function is as follows. Catalyzes the formation of acetyl phosphate from acetate and ATP. Can also catalyze the reverse reaction. The chain is Acetate kinase from Solibacter usitatus (strain Ellin6076).